The chain runs to 191 residues: 3-hydroxyanthranilate 3,4-dioxygenase 2 (191 aa).

Arg-48 contributes to the O2 binding site. His-52, Glu-73, and His-111 together coordinate Fe cation. Substrate is bound at residue Glu-73. 2 residues coordinate substrate: Arg-115 and Glu-125.

The protein belongs to the 3-HAO family. Fe(2+) is required as a cofactor.

Its subcellular location is the cytoplasm. It catalyses the reaction 3-hydroxyanthranilate + O2 = (2Z,4Z)-2-amino-3-carboxymuconate 6-semialdehyde. It functions in the pathway cofactor biosynthesis; NAD(+) biosynthesis; quinolinate from L-kynurenine: step 3/3. Catalyzes the oxidative ring opening of 3-hydroxyanthranilate to 2-amino-3-carboxymuconate semialdehyde, which spontaneously cyclizes to quinolinate. This Aspergillus clavatus (strain ATCC 1007 / CBS 513.65 / DSM 816 / NCTC 3887 / NRRL 1 / QM 1276 / 107) protein is 3-hydroxyanthranilate 3,4-dioxygenase 2 (bna1-2).